Reading from the N-terminus, the 339-residue chain is UDP-galactose transporter homolog 1 (339 aa).

9 helical membrane-spanning segments follow: residues isoleucine 5–leucine 25, valine 43–isoleucine 63, alanine 91–leucine 111, leucine 138–serine 158, serine 171–alanine 191, histidine 208–valine 228, isoleucine 246–leucine 268, serine 273–tyrosine 295, and leucine 301–lysine 321.

This sequence belongs to the nucleotide-sugar transporter family. SLC35B subfamily.

It localises to the endoplasmic reticulum membrane. May be involved in specific transport of UDP-Gal from the cytosol to the Golgi lumen. Involved in the maintenance of optimal conditions for the folding of secretory pathway proteins in the endoplasmic reticulum. This chain is UDP-galactose transporter homolog 1 (HUT1), found in Kluyveromyces lactis (strain ATCC 8585 / CBS 2359 / DSM 70799 / NBRC 1267 / NRRL Y-1140 / WM37) (Yeast).